Here is a 402-residue protein sequence, read N- to C-terminus: Tryptophan synthase beta chain 2 (402 aa).

Lys-97 carries the post-translational modification N6-(pyridoxal phosphate)lysine.

This sequence belongs to the TrpB family. Tetramer of two alpha and two beta chains. Pyridoxal 5'-phosphate is required as a cofactor.

It catalyses the reaction (1S,2R)-1-C-(indol-3-yl)glycerol 3-phosphate + L-serine = D-glyceraldehyde 3-phosphate + L-tryptophan + H2O. It participates in amino-acid biosynthesis; L-tryptophan biosynthesis; L-tryptophan from chorismate: step 5/5. Its function is as follows. The beta subunit is responsible for the synthesis of L-tryptophan from indole and L-serine. The polypeptide is Tryptophan synthase beta chain 2 (trpB2) (Wolinella succinogenes (strain ATCC 29543 / DSM 1740 / CCUG 13145 / JCM 31913 / LMG 7466 / NCTC 11488 / FDC 602W) (Vibrio succinogenes)).